Consider the following 514-residue polypeptide: tRNA-2-methylthio-N(6)-dimethylallyladenosine synthase (514 aa).

The disordered stretch occupies residues 1-21 (MNEEQRKASSVDVLAERDKKA). The region spanning 68–186 (RTFLIKTYGC…LPEILEEAYL (119 aa)) is the MTTase N-terminal domain. 6 residues coordinate [4Fe-4S] cluster: cysteine 77, cysteine 113, cysteine 147, cysteine 223, cysteine 227, and cysteine 230. Residues 209–440 (REGNIKAWVN…KKVGHYSQIA (232 aa)) enclose the Radical SAM core domain. The TRAM domain occupies 442-505 (SKYEGQTVTV…QYSLNGSFVK (64 aa)).

Belongs to the methylthiotransferase family. MiaB subfamily. As to quaternary structure, monomer. [4Fe-4S] cluster is required as a cofactor.

It localises to the cytoplasm. The catalysed reaction is N(6)-dimethylallyladenosine(37) in tRNA + (sulfur carrier)-SH + AH2 + 2 S-adenosyl-L-methionine = 2-methylsulfanyl-N(6)-dimethylallyladenosine(37) in tRNA + (sulfur carrier)-H + 5'-deoxyadenosine + L-methionine + A + S-adenosyl-L-homocysteine + 2 H(+). Its function is as follows. Catalyzes the methylthiolation of N6-(dimethylallyl)adenosine (i(6)A), leading to the formation of 2-methylthio-N6-(dimethylallyl)adenosine (ms(2)i(6)A) at position 37 in tRNAs that read codons beginning with uridine. In Staphylococcus aureus (strain N315), this protein is tRNA-2-methylthio-N(6)-dimethylallyladenosine synthase.